The primary structure comprises 293 residues: Elongation factor Ts (293 aa).

Residues 81–84 are involved in Mg(2+) ion dislocation from EF-Tu; sequence TDFV.

This sequence belongs to the EF-Ts family.

It is found in the cytoplasm. Associates with the EF-Tu.GDP complex and induces the exchange of GDP to GTP. It remains bound to the aminoacyl-tRNA.EF-Tu.GTP complex up to the GTP hydrolysis stage on the ribosome. This is Elongation factor Ts from Teredinibacter turnerae (strain ATCC 39867 / T7901).